The sequence spans 537 residues: Probable feruloyl esterase ARB_07085 (537 aa).

A signal peptide spans 1-22 (MVTLPLLLSILPLAAVFSSAAS). 3 N-linked (GlcNAc...) asparagine glycosylation sites follow: Asn67, Asn76, and Asn189. 3 disulfides stabilise this stretch: Cys196–Cys459, Cys263–Cys280, and Cys508–Cys529. The Acyl-ester intermediate role is filled by Ser197. Residues Asp264, Asp267, Val269, Asp271, and Val273 each coordinate Ca(2+). Asn339 is a glycosylation site (N-linked (GlcNAc...) asparagine). Catalysis depends on charge relay system residues Asp419 and His458.

The protein belongs to the tannase family.

The protein resides in the secreted. The catalysed reaction is feruloyl-polysaccharide + H2O = ferulate + polysaccharide.. Hydrolyzes the feruloyl-arabinose ester bond in arabinoxylans as well as the feruloyl-galactose and feruloyl-arabinose ester bonds. The polypeptide is Probable feruloyl esterase ARB_07085 (Arthroderma benhamiae (strain ATCC MYA-4681 / CBS 112371) (Trichophyton mentagrophytes)).